Here is a 108-residue protein sequence, read N- to C-terminus: Kanamycin resistance protein (108 aa).

Positions 1–99 (SRTLLLERGR…PAVYMVQTRQ (99 aa)) constitute an N-acetyltransferase domain.

This Rhizobium radiobacter (Agrobacterium tumefaciens) protein is Kanamycin resistance protein.